The sequence spans 213 residues: Retinitis pigmentosa 9 protein homolog (213 aa).

Residues 1-61 (MSSGAGSRRP…IKEDETKPED (61 aa)) form a disordered region. The tract at residues 1–147 (MSSGAGSRRP…RENKRHEKDV (147 aa)) is PIM1-binding. Basic and acidic residues-rich tracts occupy residues 9–21 (RPRE…LQRR) and 52–61 (IKEDETKPED). A CCHC-type zinc finger spans residues 96–114 (QCWRCKRYGHRTGDKECPF). Residue Lys121 forms a Glycyl lysine isopeptide (Lys-Gly) (interchain with G-Cter in SUMO2) linkage. Positions 154–213 (QLLEDSTSDDDGSSSSSSGDREKRKKRKKKEKHKKRKKEKKKKKKRKHKASKSSESSDSE) are disordered. A compositionally biased stretch (basic residues) spans 176-204 (KRKKRKKKEKHKKRKKEKKKKKKRKHKAS). Residues Ser204 and Ser206 each carry the phosphoserine; by PIM1; in vitro modification.

Binds to PIM1. Binds to ZNHIT4. In terms of tissue distribution, highly expressed in the testis, moderately in the kidney, liver and spleen, and weakly in the skeletal muscle and heart.

It localises to the nucleus. Its function is as follows. Is thought to be a target protein for the PIM1 kinase. May play some roles in B-cell proliferation in association with PIM1. This chain is Retinitis pigmentosa 9 protein homolog (rp9), found in Mus musculus (Mouse).